The chain runs to 160 residues: Cyclic pyranopterin monophosphate synthase (160 aa).

Substrate is bound by residues 75-77 and 113-114; these read LCH and ME. The active site involves D128.

This sequence belongs to the MoaC family. In terms of assembly, homohexamer; trimer of dimers.

The catalysed reaction is (8S)-3',8-cyclo-7,8-dihydroguanosine 5'-triphosphate = cyclic pyranopterin phosphate + diphosphate. It participates in cofactor biosynthesis; molybdopterin biosynthesis. Its function is as follows. Catalyzes the conversion of (8S)-3',8-cyclo-7,8-dihydroguanosine 5'-triphosphate to cyclic pyranopterin monophosphate (cPMP). The chain is Cyclic pyranopterin monophosphate synthase from Methylobacterium sp. (strain 4-46).